The sequence spans 127 residues: Small ribosomal subunit protein bS6 (127 aa).

The disordered stretch occupies residues 96–127; sequence VTTPSPMMKEEKSRSLTPAAGDEGKPAEAAEA. A compositionally biased stretch (basic and acidic residues) spans 117 to 127; sequence DEGKPAEAAEA.

The protein belongs to the bacterial ribosomal protein bS6 family.

Functionally, binds together with bS18 to 16S ribosomal RNA. The sequence is that of Small ribosomal subunit protein bS6 from Azoarcus sp. (strain BH72).